Consider the following 336-residue polypeptide: ATP-dependent 6-phosphofructokinase 3 (336 aa).

Residues glycine 10, 72–73 (RE), and 108–111 (GNGT) each bind ATP. Position 109 (asparagine 109) interacts with Mg(2+). Residues 131–133 (TID), arginine 168, 175–177 (MGH), glutamate 228, arginine 255, and 261–264 (YIQR) contribute to the substrate site. Residue aspartate 133 is the Proton acceptor of the active site.

Belongs to the phosphofructokinase type A (PFKA) family. Mixed-substrate PFK group III subfamily. In terms of assembly, homodimer or homotetramer. The cofactor is Mg(2+).

The protein resides in the cytoplasm. The enzyme catalyses beta-D-fructose 6-phosphate + ATP = beta-D-fructose 1,6-bisphosphate + ADP + H(+). Its pathway is carbohydrate degradation; glycolysis; D-glyceraldehyde 3-phosphate and glycerone phosphate from D-glucose: step 3/4. In terms of biological role, catalyzes the phosphorylation of D-fructose 6-phosphate to fructose 1,6-bisphosphate by ATP, the first committing step of glycolysis. This is ATP-dependent 6-phosphofructokinase 3 from Bacteroides thetaiotaomicron (strain ATCC 29148 / DSM 2079 / JCM 5827 / CCUG 10774 / NCTC 10582 / VPI-5482 / E50).